The primary structure comprises 66 residues: Large ribosomal subunit protein bL35 (66 aa).

It belongs to the bacterial ribosomal protein bL35 family.

The protein is Large ribosomal subunit protein bL35 of Phenylobacterium zucineum (strain HLK1).